Here is a 258-residue protein sequence, read N- to C-terminus: Acyl-[acyl-carrier-protein]--UDP-N-acetylglucosamine O-acyltransferase (258 aa).

It belongs to the transferase hexapeptide repeat family. LpxA subfamily. In terms of assembly, homotrimer.

It is found in the cytoplasm. The enzyme catalyses a (3R)-hydroxyacyl-[ACP] + UDP-N-acetyl-alpha-D-glucosamine = a UDP-3-O-[(3R)-3-hydroxyacyl]-N-acetyl-alpha-D-glucosamine + holo-[ACP]. It functions in the pathway glycolipid biosynthesis; lipid IV(A) biosynthesis; lipid IV(A) from (3R)-3-hydroxytetradecanoyl-[acyl-carrier-protein] and UDP-N-acetyl-alpha-D-glucosamine: step 1/6. Its function is as follows. Involved in the biosynthesis of lipid A, a phosphorylated glycolipid that anchors the lipopolysaccharide to the outer membrane of the cell. The protein is Acyl-[acyl-carrier-protein]--UDP-N-acetylglucosamine O-acyltransferase of Pseudomonas fluorescens (strain ATCC BAA-477 / NRRL B-23932 / Pf-5).